The primary structure comprises 211 residues: Proteasome subunit beta 2 (211 aa).

Residues 1-17 (MVIMGNELQLENKILKG) constitute a propeptide, removed in mature form; by autocatalysis. T18 acts as the Nucleophile in catalysis.

The protein belongs to the peptidase T1B family. As to quaternary structure, the 20S proteasome core is composed of 14 alpha and 14 beta subunits that assemble into four stacked heptameric rings, resulting in a barrel-shaped structure. The two inner rings, each composed of seven catalytic beta subunits, are sandwiched by two outer rings, each composed of seven alpha subunits. The catalytic chamber with the active sites is on the inside of the barrel. Has a gated structure, the ends of the cylinder being occluded by the N-termini of the alpha-subunits. Is capped at one or both ends by the proteasome regulatory ATPase, PAN.

The protein localises to the cytoplasm. It carries out the reaction Cleavage of peptide bonds with very broad specificity.. With respect to regulation, the formation of the proteasomal ATPase PAN-20S proteasome complex, via the docking of the C-termini of PAN into the intersubunit pockets in the alpha-rings, triggers opening of the gate for substrate entry. Interconversion between the open-gate and close-gate conformations leads to a dynamic regulation of the 20S proteasome proteolysis activity. In terms of biological role, component of the proteasome core, a large protease complex with broad specificity involved in protein degradation. The sequence is that of Proteasome subunit beta 2 from Saccharolobus solfataricus (strain 98/2) (Sulfolobus solfataricus).